We begin with the raw amino-acid sequence, 260 residues long: Adenosylcobinamide-GDP ribazoletransferase (260 aa).

The next 8 membrane-spanning stretches (helical) occupy residues 3-23 (APLW…LPAW), 36-56 (FAPW…LVLI), 60-80 (WPTS…SGGL), 108-128 (VGAS…ASLL), 133-153 (LAPL…LWAM), 180-200 (ALPA…LMIV), 206-226 (MVLM…PELL), and 239-259 (GASV…LLPA).

It belongs to the CobS family. It depends on Mg(2+) as a cofactor.

The protein resides in the cell inner membrane. The catalysed reaction is alpha-ribazole + adenosylcob(III)inamide-GDP = adenosylcob(III)alamin + GMP + H(+). It catalyses the reaction alpha-ribazole 5'-phosphate + adenosylcob(III)inamide-GDP = adenosylcob(III)alamin 5'-phosphate + GMP + H(+). Its pathway is cofactor biosynthesis; adenosylcobalamin biosynthesis; adenosylcobalamin from cob(II)yrinate a,c-diamide: step 7/7. Joins adenosylcobinamide-GDP and alpha-ribazole to generate adenosylcobalamin (Ado-cobalamin). Also synthesizes adenosylcobalamin 5'-phosphate from adenosylcobinamide-GDP and alpha-ribazole 5'-phosphate. This chain is Adenosylcobinamide-GDP ribazoletransferase, found in Prochlorococcus marinus (strain MIT 9313).